Here is a 191-residue protein sequence, read N- to C-terminus: Cell division protein SepF (191 aa).

Over residues 156–167 (EEASPSNMSNKG) the composition is skewed to polar residues. Residues 156 to 191 (EEASPSNMSNKGNDLISKETSPAPEPAWGETVATAL) are disordered.

This sequence belongs to the SepF family. As to quaternary structure, homodimer. Interacts with FtsZ.

It localises to the cytoplasm. In terms of biological role, cell division protein that is part of the divisome complex and is recruited early to the Z-ring. Probably stimulates Z-ring formation, perhaps through the cross-linking of FtsZ protofilaments. Its function overlaps with FtsA. This Prochlorococcus marinus (strain NATL1A) protein is Cell division protein SepF.